A 415-amino-acid chain; its full sequence is Runt-related transcription factor 3 (415 aa).

3 disordered regions span residues 1 to 48 (MRIP…GGRA), 176 to 266 (GPRE…FPDP), and 375 to 415 (NLMN…WRPY). The Runt domain occupies 54 to 182 (SMVDVLADHA…TVDGPREPRR (129 aa)). Over residues 186-205 (KLEDQTKPFPDRFGDLERLR) the composition is skewed to basic and acidic residues. Residue K192 forms a Glycyl lysine isopeptide (Lys-Gly) (interchain with G-Cter in SUMO2) linkage. The segment covering 209–240 (TPSTPSPRGSLSTTSHFSSQPQTPIQGTSELN) has biased composition (polar residues). S243 carries the phosphoserine modification. The span at 393 to 402 (SHSNSPTALS) shows a compositional bias: polar residues. Residues 406–415 (RMDEAVWRPY) are compositionally biased toward basic and acidic residues.

As to quaternary structure, heterodimer with CBFB. RUNX3 binds DNA as a monomer and through the Runt domain. DNA-binding is increased by heterodimerization. Interacts with TLE1 and SUV39H1. The tyrosine phosphorylated form (via runt domain) interacts with SRC (via protein kinase domain). Interacts with FYN and LCK. Interacts with FOXP3. Interacts with ZFHX3. Interacts with TBX21. In terms of processing, phosphorylated on tyrosine residues by SRC. Phosphorylated by LCK and FYN. As to expression, expressed in gastric cancer tissues (at protein level).

It localises to the nucleus. The protein resides in the cytoplasm. Forms the heterodimeric complex core-binding factor (CBF) with CBFB. RUNX members modulate the transcription of their target genes through recognizing the core consensus binding sequence 5'-TGTGGT-3', or very rarely, 5'-TGCGGT-3', within their regulatory regions via their runt domain, while CBFB is a non-DNA-binding regulatory subunit that allosterically enhances the sequence-specific DNA-binding capacity of RUNX. The heterodimers bind to the core site of a number of enhancers and promoters, including murine leukemia virus, polyomavirus enhancer, T-cell receptor enhancers, LCK, IL3 and GM-CSF promoters. May be involved in the control of cellular proliferation and/or differentiation. In association with ZFHX3, up-regulates CDKN1A promoter activity following TGF-beta stimulation. CBF complexes repress ZBTB7B transcription factor during cytotoxic (CD8+) T cell development. They bind to RUNX-binding sequence within the ZBTB7B locus acting as transcriptional silencer and allowing for cytotoxic T cell differentiation. CBF complexes binding to the transcriptional silencer is essential for recruitment of nuclear protein complexes that catalyze epigenetic modifications to establish epigenetic ZBTB7B silencing. Necessary for the development and survival of sensory neurons expressing parvalbumin. The sequence is that of Runt-related transcription factor 3 (RUNX3) from Homo sapiens (Human).